The primary structure comprises 197 residues: Ribonuclease HII (197 aa).

The RNase H type-2 domain occupies 11-197 (HLIAGVDEVG…FAPVKKILGL (187 aa)). Asp-17, Glu-18, and Asp-109 together coordinate a divalent metal cation.

This sequence belongs to the RNase HII family. Mn(2+) is required as a cofactor. It depends on Mg(2+) as a cofactor.

The protein localises to the cytoplasm. It catalyses the reaction Endonucleolytic cleavage to 5'-phosphomonoester.. Its function is as follows. Endonuclease that specifically degrades the RNA of RNA-DNA hybrids. In Actinobacillus pleuropneumoniae serotype 7 (strain AP76), this protein is Ribonuclease HII.